The primary structure comprises 285 residues: Urease accessory protein UreD (285 aa).

The protein belongs to the UreD family. UreD, UreF and UreG form a complex that acts as a GTP-hydrolysis-dependent molecular chaperone, activating the urease apoprotein by helping to assemble the nickel containing metallocenter of UreC. The UreE protein probably delivers the nickel.

It localises to the cytoplasm. In terms of biological role, required for maturation of urease via the functional incorporation of the urease nickel metallocenter. This Methylobacillus flagellatus (strain ATCC 51484 / DSM 6875 / VKM B-1610 / KT) protein is Urease accessory protein UreD.